Reading from the N-terminus, the 293-residue chain is ATP synthase gamma chain (293 aa).

The protein belongs to the ATPase gamma chain family. F-type ATPases have 2 components, CF(1) - the catalytic core - and CF(0) - the membrane proton channel. CF(1) has five subunits: alpha(3), beta(3), gamma(1), delta(1), epsilon(1). CF(0) has three main subunits: a, b and c.

It localises to the cell inner membrane. Produces ATP from ADP in the presence of a proton gradient across the membrane. The gamma chain is believed to be important in regulating ATPase activity and the flow of protons through the CF(0) complex. This chain is ATP synthase gamma chain, found in Gluconacetobacter diazotrophicus (strain ATCC 49037 / DSM 5601 / CCUG 37298 / CIP 103539 / LMG 7603 / PAl5).